The sequence spans 459 residues: Lipase 4 (459 aa).

A signal peptide spans 1–14 (MLFLLFLLVAPIYA). Cysteines 110 and 281 form a disulfide. S194 (charge relay system) is an active-site residue. N-linked (GlcNAc...) asparagine glycosylation is found at N229 and N266. Active-site charge relay system residues include D343 and H376. C359 and C404 are oxidised to a cystine.

Belongs to the AB hydrolase superfamily. Lipase family. Class Lip subfamily.

The protein localises to the secreted. It carries out the reaction a triacylglycerol + H2O = a diacylglycerol + a fatty acid + H(+). Functionally, secreted lipase that is able to hydrolyze both the neutral triacylglycerols and the monopalmitate ester Tween 40, allowing the use of hydrolyzed products as carbon sources. Has broad lipolytic activity, which may be important for colonization and subsequent infection, therefore contributing to the persistence and virulence in human tissue. The chain is Lipase 4 from Candida albicans (strain SC5314 / ATCC MYA-2876) (Yeast).